Reading from the N-terminus, the 270-residue chain is Ribosomal RNA small subunit methyltransferase J (270 aa).

Residues 126 to 127 and D182 contribute to the S-adenosyl-L-methionine site; that span reads ER.

The protein belongs to the methyltransferase superfamily. RsmJ family.

The protein localises to the cytoplasm. The enzyme catalyses guanosine(1516) in 16S rRNA + S-adenosyl-L-methionine = N(2)-methylguanosine(1516) in 16S rRNA + S-adenosyl-L-homocysteine + H(+). Specifically methylates the guanosine in position 1516 of 16S rRNA. The protein is Ribosomal RNA small subunit methyltransferase J of Acinetobacter baylyi (strain ATCC 33305 / BD413 / ADP1).